The sequence spans 237 residues: Ubiquinone biosynthesis O-methyltransferase (237 aa).

4 residues coordinate S-adenosyl-L-methionine: Arg-38, Gly-58, Asp-79, and Met-124.

This sequence belongs to the methyltransferase superfamily. UbiG/COQ3 family.

The enzyme catalyses a 3-demethylubiquinol + S-adenosyl-L-methionine = a ubiquinol + S-adenosyl-L-homocysteine + H(+). The catalysed reaction is a 3-(all-trans-polyprenyl)benzene-1,2-diol + S-adenosyl-L-methionine = a 2-methoxy-6-(all-trans-polyprenyl)phenol + S-adenosyl-L-homocysteine + H(+). It participates in cofactor biosynthesis; ubiquinone biosynthesis. Its function is as follows. O-methyltransferase that catalyzes the 2 O-methylation steps in the ubiquinone biosynthetic pathway. This is Ubiquinone biosynthesis O-methyltransferase from Acinetobacter baumannii (strain SDF).